The chain runs to 306 residues: Pantothenate kinase (306 aa).

Residue 91-98 coordinates ATP; sequence GSVAVGKS.

This sequence belongs to the prokaryotic pantothenate kinase family.

The protein localises to the cytoplasm. It catalyses the reaction (R)-pantothenate + ATP = (R)-4'-phosphopantothenate + ADP + H(+). It functions in the pathway cofactor biosynthesis; coenzyme A biosynthesis; CoA from (R)-pantothenate: step 1/5. This is Pantothenate kinase from Streptococcus gordonii (strain Challis / ATCC 35105 / BCRC 15272 / CH1 / DL1 / V288).